We begin with the raw amino-acid sequence, 84 residues long: UPF0291 protein EUBELI_00985 (84 aa).

This sequence belongs to the UPF0291 family.

Its subcellular location is the cytoplasm. The sequence is that of UPF0291 protein EUBELI_00985 from Lachnospira eligens (strain ATCC 27750 / DSM 3376 / VPI C15-48 / C15-B4) (Eubacterium eligens).